The primary structure comprises 210 residues: HTH-type transcriptional repressor FabR (210 aa).

Residues 10–70 (KTRRSLVEAA…TMVDESGLML (61 aa)) form the HTH tetR-type domain. Residues 33-52 (SLREVAREAGIAPTSFYRHF) constitute a DNA-binding region (H-T-H motif).

In terms of assembly, homodimer.

It is found in the cytoplasm. In terms of biological role, represses the transcription of fabB, involved in unsaturated fatty acid (UFA) biosynthesis. By controlling UFA production, FabR directly influences the physical properties of the membrane bilayer. The protein is HTH-type transcriptional repressor FabR of Salmonella paratyphi A (strain ATCC 9150 / SARB42).